The following is a 494-amino-acid chain: Splicing regulatory glutamine/lysine-rich protein 1 (494 aa).

Positions 69-145 (RTVYVGNLNS…RPLKINHSNN (77 aa)) constitute an RRM domain. S174 and S187 each carry phosphoserine. The disordered stretch occupies residues 176–494 (ISAAIEPESG…ESPCSKADAV (319 aa)). Residues 183–192 (ESGKSNERKG) show a composition bias toward basic and acidic residues. The span at 193–262 (GRSRSHTRSK…KSRSRSRSRD (70 aa)) shows a compositional bias: basic residues. Positions 263-340 (KRKDTREKVK…DRSKETDEKR (78 aa)) are enriched in basic and acidic residues. T348 bears the Phosphothreonine mark. The span at 357 to 373 (RRSRSTSRERRRRRSRS) shows a compositional bias: basic residues. Over residues 404–474 (REKERDHISD…SPRTEDEGKV (71 aa)) the composition is skewed to basic and acidic residues. A compositionally biased stretch (polar residues) spans 476–486 (HNGNCQPNEES). K490 participates in a covalent cross-link: Glycyl lysine isopeptide (Lys-Gly) (interchain with G-Cter in SUMO2).

The protein belongs to the splicing factor SR family. Homodimer. Binds SFRS1, SFRS2, SFRS3 and SFRS6. Interacts with the spliceosome. Interacts with SREK1IP1.

The protein resides in the nucleus. Functionally, participates in the regulation of alternative splicing by modulating the activity of other splice facors. Inhibits the splicing activity of SFRS1, SFRS2 and SFRS6. Augments the splicing activity of SFRS3. This Mus musculus (Mouse) protein is Splicing regulatory glutamine/lysine-rich protein 1 (Srek1).